Reading from the N-terminus, the 83-residue chain is Small ribosomal subunit protein uS17 (83 aa).

This sequence belongs to the universal ribosomal protein uS17 family. As to quaternary structure, part of the 30S ribosomal subunit.

Its function is as follows. One of the primary rRNA binding proteins, it binds specifically to the 5'-end of 16S ribosomal RNA. This is Small ribosomal subunit protein uS17 from Ehrlichia chaffeensis (strain ATCC CRL-10679 / Arkansas).